We begin with the raw amino-acid sequence, 228 residues long: Large ribosomal subunit protein uL23m (228 aa).

The tract at residues 194–228 is disordered; sequence PEEEGWSEVEENLPLDESAESAAEESSSKGSETRQ. The segment covering 195-216 has biased composition (acidic residues); sequence EEEGWSEVEENLPLDESAESAA.

Belongs to the universal ribosomal protein uL23 family. As to quaternary structure, component of the mitochondrial large ribosomal subunit (mt-LSU). Mature N.crassa 74S mitochondrial ribosomes consist of a small (37S) and a large (54S) subunit. The 37S small subunit contains a 16S ribosomal RNA (16S mt-rRNA) and 32 different proteins. The 54S large subunit contains a 23S rRNA (23S mt-rRNA) and 42 different proteins. uL23m forms the wall of the exit tunnel.

It localises to the mitochondrion. Component of the mitochondrial ribosome (mitoribosome), a dedicated translation machinery responsible for the synthesis of mitochondrial genome-encoded proteins, including at least some of the essential transmembrane subunits of the mitochondrial respiratory chain. The mitoribosomes are attached to the mitochondrial inner membrane and translation products are cotranslationally integrated into the membrane. This Neurospora crassa (strain ATCC 24698 / 74-OR23-1A / CBS 708.71 / DSM 1257 / FGSC 987) protein is Large ribosomal subunit protein uL23m (mrp20).